Here is a 529-residue protein sequence, read N- to C-terminus: Aldehyde dehydrogenase 1 (529 aa).

251-256 (GSTYVG) provides a ligand contact to NAD(+). Residues Glu273 and Cys307 contribute to the active site.

This sequence belongs to the aldehyde dehydrogenase family.

It catalyses the reaction an aldehyde + NAD(+) + H2O = a carboxylate + NADH + 2 H(+). The polypeptide is Aldehyde dehydrogenase 1 (Entamoeba histolytica (strain ATCC 30459 / HM-1:IMSS / ABRM)).